Reading from the N-terminus, the 883-residue chain is Phosphoenolpyruvate carboxylase (883 aa).

Active-site residues include H141 and K547.

The protein belongs to the PEPCase type 1 family. Mg(2+) is required as a cofactor.

The enzyme catalyses oxaloacetate + phosphate = phosphoenolpyruvate + hydrogencarbonate. Functionally, forms oxaloacetate, a four-carbon dicarboxylic acid source for the tricarboxylic acid cycle. This Chromohalobacter salexigens (strain ATCC BAA-138 / DSM 3043 / CIP 106854 / NCIMB 13768 / 1H11) protein is Phosphoenolpyruvate carboxylase.